Reading from the N-terminus, the 415-residue chain is Ubp4-interactor sfp47 (415 aa).

Phosphoserine occurs at positions 221 and 226. Position 231 is a phosphothreonine (Thr231). Ser235 bears the Phosphoserine mark. Residues 352 to 415 (PIFAYVRALY…PSNYIEELEY (64 aa)) enclose the SH3 domain.

As to quaternary structure, interacts with ubp4.

The protein localises to the cytoplasm. It localises to the endosome. Its function is as follows. Required for the regulation of activity and recruitment of ubp4 to endosomes. The sequence is that of Ubp4-interactor sfp47 (sfp47) from Schizosaccharomyces pombe (strain 972 / ATCC 24843) (Fission yeast).